A 156-amino-acid chain; its full sequence is Cell division protein SepF (156 aa).

Positions serine 23–aspartate 36 are enriched in basic and acidic residues. Positions serine 23–alanine 48 are disordered. Polar residues predominate over residues proline 37–alanine 48.

It belongs to the SepF family. As to quaternary structure, homodimer. Interacts with FtsZ.

It localises to the cytoplasm. In terms of biological role, cell division protein that is part of the divisome complex and is recruited early to the Z-ring. Probably stimulates Z-ring formation, perhaps through the cross-linking of FtsZ protofilaments. Its function overlaps with FtsA. The protein is Cell division protein SepF of Bacillus cereus (strain ATCC 10987 / NRS 248).